Here is a 1044-residue protein sequence, read N- to C-terminus: Translation initiation factor IF-2 (1044 aa).

The segment at 55–458 (EAQEGQGAGK…KRKASAQERR (404 aa)) is disordered. Low complexity predominate over residues 57-77 (QEGQGAGKSAAKSAKPAAQPK). Positions 104 to 146 (LSEKRERRPLTERRPLAERRPLAERPLVDRPVTERPLAERPAA) are enriched in basic and acidic residues. 3 stretches are compositionally biased toward low complexity: residues 147–168 (ELRP…AQPV), 190–231 (KAQP…QKPA), and 254–265 (ASSRPASAAPAA). Residues 267–281 (GEKRPAAAAERREEP) show a composition bias toward basic and acidic residues. 2 stretches are compositionally biased toward low complexity: residues 352–375 (AAGQ…AGAP) and 383–395 (APQR…APLA). Residues 399–444 (LDPKVAEQAKAGEGKPRYGQSGDKRRADLYDRREHPSSQPSEEKLF) show a composition bias toward basic and acidic residues. A tr-type G domain is found at 546–714 (PRHPVVTIMG…ILVLAEVSDL (169 aa)). Residues 555-562 (GHVDHGKT) are G1. Residue 555–562 (GHVDHGKT) coordinates GTP. The G2 stretch occupies residues 580–584 (GITQH). Positions 601 to 604 (DTPG) are G3. GTP is bound by residues 601-605 (DTPGH) and 655-658 (NKID). The G4 stretch occupies residues 655 to 658 (NKID). Residues 691–693 (SAK) form a G5 region.

It belongs to the TRAFAC class translation factor GTPase superfamily. Classic translation factor GTPase family. IF-2 subfamily.

Its subcellular location is the cytoplasm. Functionally, one of the essential components for the initiation of protein synthesis. Protects formylmethionyl-tRNA from spontaneous hydrolysis and promotes its binding to the 30S ribosomal subunits. Also involved in the hydrolysis of GTP during the formation of the 70S ribosomal complex. This is Translation initiation factor IF-2 from Symbiobacterium thermophilum (strain DSM 24528 / JCM 14929 / IAM 14863 / T).